The chain runs to 292 residues: Elongation factor Ts (292 aa).

Residues 79–82 (TDFV) form an involved in Mg(2+) ion dislocation from EF-Tu region.

The protein belongs to the EF-Ts family.

The protein resides in the cytoplasm. Associates with the EF-Tu.GDP complex and induces the exchange of GDP to GTP. It remains bound to the aminoacyl-tRNA.EF-Tu.GTP complex up to the GTP hydrolysis stage on the ribosome. The protein is Elongation factor Ts of Xanthomonas campestris pv. campestris (strain B100).